Consider the following 331-residue polypeptide: Type II secretion system protein K (331 aa).

A propeptide spans 1-9 (MPSCRRQGG) (leader sequence). The helical transmembrane segment at 8–27 (GGMALLVVLLILSVMVIIAS) threads the bilayer. Residues 28-331 (NMSGRLQLEL…MLRRLNGGAE (304 aa)) are Periplasmic-facing.

Belongs to the GSP K family. As to quaternary structure, type II secretion is composed of four main components: the outer membrane complex, the inner membrane complex, the cytoplasmic secretion ATPase and the periplasm-spanning pseudopilus. Interacts with core component ExeG. Cleaved by prepilin peptidase.

It is found in the cell inner membrane. In terms of biological role, component of the type II secretion system required for the energy-dependent secretion of extracellular factors such as proteases and toxins from the periplasm. Plays a role in pseudopilus assembly and seems to control its length. Interacts with the pseudopilus tip complex that is critical for the recognition and binding of secretion substrates. The chain is Type II secretion system protein K (exeK) from Aeromonas hydrophila.